The chain runs to 198 residues: Imidazole glycerol phosphate synthase subunit HisH (198 aa).

Residues 2–198 (KALLIDYGSG…ALARRYFEVL (197 aa)) form the Glutamine amidotransferase type-1 domain. Cys80 acts as the Nucleophile in catalysis. Catalysis depends on residues His176 and Glu178.

Heterodimer of HisH and HisF.

The protein resides in the cytoplasm. The enzyme catalyses 5-[(5-phospho-1-deoxy-D-ribulos-1-ylimino)methylamino]-1-(5-phospho-beta-D-ribosyl)imidazole-4-carboxamide + L-glutamine = D-erythro-1-(imidazol-4-yl)glycerol 3-phosphate + 5-amino-1-(5-phospho-beta-D-ribosyl)imidazole-4-carboxamide + L-glutamate + H(+). The catalysed reaction is L-glutamine + H2O = L-glutamate + NH4(+). The protein operates within amino-acid biosynthesis; L-histidine biosynthesis; L-histidine from 5-phospho-alpha-D-ribose 1-diphosphate: step 5/9. Its function is as follows. IGPS catalyzes the conversion of PRFAR and glutamine to IGP, AICAR and glutamate. The HisH subunit catalyzes the hydrolysis of glutamine to glutamate and ammonia as part of the synthesis of IGP and AICAR. The resulting ammonia molecule is channeled to the active site of HisF. In Thermus thermophilus (strain ATCC BAA-163 / DSM 7039 / HB27), this protein is Imidazole glycerol phosphate synthase subunit HisH.